Here is a 250-residue protein sequence, read N- to C-terminus: Phosphoribosylaminoimidazole-succinocarboxamide synthase (250 aa).

Belongs to the SAICAR synthetase family.

It catalyses the reaction 5-amino-1-(5-phospho-D-ribosyl)imidazole-4-carboxylate + L-aspartate + ATP = (2S)-2-[5-amino-1-(5-phospho-beta-D-ribosyl)imidazole-4-carboxamido]succinate + ADP + phosphate + 2 H(+). It functions in the pathway purine metabolism; IMP biosynthesis via de novo pathway; 5-amino-1-(5-phospho-D-ribosyl)imidazole-4-carboxamide from 5-amino-1-(5-phospho-D-ribosyl)imidazole-4-carboxylate: step 1/2. The chain is Phosphoribosylaminoimidazole-succinocarboxamide synthase from Synechococcus sp. (strain WH7803).